The chain runs to 402 residues: Bacteriochlorophyllide c C-7(1)-hydroxylase (402 aa).

The Radical SAM core domain maps to 104 to 359 (VIGMNQDIIN…IKYQDRFDMP (256 aa)). 3 residues coordinate [4Fe-4S] cluster: C120, C129, and C132.

Belongs to the radical SAM superfamily. [4Fe-4S] cluster serves as cofactor.

The enzyme catalyses a bacteriochlorophyllide c + 2 S-adenosyl-L-methionine + H2O = a bacteriochlorophyllide e + 2 5'-deoxyadenosine + 2 L-methionine + 2 H(+). It catalyses the reaction a bacteriochlorophyllide d + 2 S-adenosyl-L-methionine + H2O = a bacteriochlorophyllide f + 2 5'-deoxyadenosine + 2 L-methionine + 2 H(+). It participates in porphyrin-containing compound metabolism; bacteriochlorophyll biosynthesis. Functionally, involved in the biosynthesis of bacteriochlorophyll e (BChl e). Catalyzes two consecutive hydroxylation reactions of the C-7 methyl group of bacteriochlorophyllide c (BChlide c) to form a geminal diol intermediate that spontaneously dehydrates to produce the formyl group of bacteriochlorophyllide e (BChlide e). Also able to catalyze the same reaction for bacteriochlorophyllide d (BChlide d) to give rise to bacteriochlorophyllide f (BChlide f). In Chlorobaculum limnaeum, this protein is Bacteriochlorophyllide c C-7(1)-hydroxylase.